The following is a 384-amino-acid chain: Urea transporter 1 (384 aa).

Glu39 is modified (phosphoserine). A run of 5 helical transmembrane segments spans residues 61 to 81 (ISQVVFVSNPISGILILVGLL), 85 to 105 (PWWALCGCVGTVVSTLTALLL), 111 to 131 (AIAAGLQGYNATLVGILMAVF), 138 to 158 (FWWLIFPVSAMSMTCPVFSSA), and 168 to 188 (LPVFTLPFNMALSMYLSATGH). A glycan (N-linked (GlcNAc...) asparagine) is linked at Asn206. A run of 4 helical transmembrane segments spans residues 250 to 270 (LMCLHAAIGSLLGVIAGLSLA), 276 to 296 (IYFGLWGFNSSLACIAIGGMF), 305 to 325 (LLALACALFTAYFGACMAHLM), and 327 to 347 (VVHLPACTWSFCLATLLFLLL).

It belongs to the urea transporter family. Homotrimer; each subunit contains a pore through which urea permeates. Identified in a complex with STOM. Post-translationally, N-glycosylated in red blood cells, as well as in most non-erythroid tissues, except in the gastrocnemius muscle and in the gastrointestinal tract, including liver, colon and stomach. Expressed in brain, kidney, heart, liver, lung, skeletal muscle, spleen, testis, ureter and urinary bladder (at protein level). Along the gastrointestinal tract, detected in colon, jejunum and stomach (at protein level). In the kidney, expressed in some microvessels of the inner and outer medulla, but not all (at protein level). Not detected in the cortex (at protein level). Detected in the urothelium all along the urinary tract, including the papilla surface, the ureter, the bladder and the urethra (at protein level). In the brain, expressed at the border of the corpus callosum and striatum in astrocytic cellular processes surrounding blood microvessels (at protein level). Detected in erythrocytes (at protein level).

The protein localises to the cell membrane. It is found in the basolateral cell membrane. The enzyme catalyses urea(in) = urea(out). Its function is as follows. Mediates the transport of urea driven by a concentration gradient across the cell membranes of erythrocytes and the renal inner medullary collecting duct which is critical to the urinary concentrating mechanism. Facilitates water transport in erythrocytes. This is Urea transporter 1 (Slc14a1) from Mus musculus (Mouse).